A 37-amino-acid chain; its full sequence is Large ribosomal subunit protein bL36c (37 aa).

The protein belongs to the bacterial ribosomal protein bL36 family.

It is found in the plastid. The protein resides in the chloroplast. The polypeptide is Large ribosomal subunit protein bL36c (rpl36) (Anthoceros angustus (Hornwort)).